The following is a 207-amino-acid chain: MALLFARSLRLCRWGAKRLGVASTEAQRGVSFKLEEKTAHSSLALFRDDTGVKYGLVGLEPTKVALNVERFREWAVVLADTAVTSGRHYWEVTVKRSQQFRIGVADVDMSRDSCIGVDDRSWVFTYAQRKWYTMLANEKAPVEGIGQPEKVGLLLEYEAQKLSLVDVSQVSVVHTLQTDFRGPVVPAFALWDGELLTHSGLEVPEGL.

Residues 12–206 (CRWGAKRLGV…THSGLEVPEG (195 aa)) form the B30.2/SPRY domain. 2 positions are modified to N6-acetyllysine: K53 and K130. K139 carries the post-translational modification N6-succinyllysine.

This Homo sapiens (Human) protein is SPRY domain-containing protein 4 (SPRYD4).